A 34-amino-acid polypeptide reads, in one-letter code: Leader peptide SpeFL (34 aa).

Residues 10–16 (HIRRTTH) carry the Ornithine recognition loop motif. R13 serves as a coordination point for L-ornithine.

It belongs to the speF operon leader peptide family. In terms of assembly, binds ornithine in stalled 70S ribosomes, blocking the upper two-thirds of the exit tunnel. Contacts 23S rRNA and ribosomal proteins L4 and L22.

Its function is as follows. A small protein (arrest peptide) encoded upstream of inducible ornithine carboxylase gene (speF) that controls expression of downstream genes (speF and potE) by transcriptional and translational attenuation. Its expression controls transcription and translation of downstream SpeF; translation pausing at low Arg levels on this mRNA prevents premature Rho-dependent transcription termination of speF and also enhances SprF translation by preventing sequestration of its ribosome-binding site. In the presence of high Arg levels translation of this protein allows the formation of an speF mRNA structure that is degraded by RNase G. The sequence is that of Leader peptide SpeFL from Salmonella typhimurium (strain SL1344).